The sequence spans 328 residues: COP9 signalosome complex subunit 6 (328 aa).

The MPN domain occupies 42–175 (VALHPLVILN…VSVFESVIDI (134 aa)).

Belongs to the peptidase M67A family. CSN6 subfamily. In terms of assembly, component of the CSN complex, composed of COPS1/GPS1, COPS2, COPS3, COPS4, COPS5, COPS6, COPS7 (COPS7A or COPS7B), COPS8 and COPS9. In the complex, it probably interacts directly with COPS2, COPS4, COPS5, COPS7 (COPS7A or COPS7B) and COPS9. Interacts with the translation initiation factor EIF3S6. Interacts weakly with RBX1. Directly interacts with COP1 and 14-3-3 protein sigma/SFN. Interacts with ERCC6.

Its subcellular location is the cytoplasm. It is found in the nucleus. Functionally, component of the COP9 signalosome complex (CSN), a complex involved in various cellular and developmental processes. The CSN complex is an essential regulator of the ubiquitin (Ubl) conjugation pathway by mediating the deneddylation of the cullin subunits of SCF-type E3 ligase complexes, leading to decrease the Ubl ligase activity of SCF-type complexes such as SCF, CSA or DDB2. The complex is also involved in phosphorylation of p53/TP53, c-jun/JUN, IkappaBalpha/NFKBIA, ITPK1 and IRF8, possibly via its association with CK2 and PKD kinases. CSN-dependent phosphorylation of TP53 and JUN promotes and protects degradation by the Ubl system, respectively. Has some glucocorticoid receptor-responsive activity. Stabilizes COP1 through reducing COP1 auto-ubiquitination and decelerating COP1 turnover rate, hence regulates the ubiquitination of COP1 targets, including SFN. This chain is COP9 signalosome complex subunit 6 (COPS6), found in Pongo abelii (Sumatran orangutan).